The following is a 650-amino-acid chain: 1-deoxy-D-xylulose-5-phosphate synthase (650 aa).

Thiamine diphosphate is bound by residues histidine 73 and 113–115; that span reads SHA. A Mg(2+)-binding site is contributed by aspartate 145. Thiamine diphosphate-binding positions include 146–147, asparagine 175, tyrosine 287, and glutamate 369; that span reads GA. Mg(2+) is bound at residue asparagine 175.

It belongs to the transketolase family. DXPS subfamily. In terms of assembly, homodimer. It depends on Mg(2+) as a cofactor. Requires thiamine diphosphate as cofactor.

The catalysed reaction is D-glyceraldehyde 3-phosphate + pyruvate + H(+) = 1-deoxy-D-xylulose 5-phosphate + CO2. Its pathway is metabolic intermediate biosynthesis; 1-deoxy-D-xylulose 5-phosphate biosynthesis; 1-deoxy-D-xylulose 5-phosphate from D-glyceraldehyde 3-phosphate and pyruvate: step 1/1. Functionally, catalyzes the acyloin condensation reaction between C atoms 2 and 3 of pyruvate and glyceraldehyde 3-phosphate to yield 1-deoxy-D-xylulose-5-phosphate (DXP). In Leifsonia xyli subsp. xyli (strain CTCB07), this protein is 1-deoxy-D-xylulose-5-phosphate synthase.